The primary structure comprises 534 residues: uncharacterized protein (534 aa).

3 disordered regions span residues 1-150 (MSDS…DIPP), 252-284 (RRFR…NGQP), and 383-434 (WKSQ…PSLP). Residues 8 to 67 (SQREDNYSRDRRSRFTEDSYSRRDSQRSGNEAPRESRYYRKEEHLQERSRSRSPARDSRW) show a composition bias toward basic and acidic residues. The span at 102–113 (SLQSTKATSSRT) shows a compositional bias: polar residues. Residues 130–141 (PSAPAPPLPPSS) are compositionally biased toward pro residues. Residues 252 to 262 (RRFRRREDNER) are compositionally biased toward basic and acidic residues. Low complexity predominate over residues 263-272 (NNSNSPRNFS). A compositionally biased stretch (polar residues) spans 393 to 408 (NQGNRAYNPPNRNQAF).

This is an uncharacterized protein from Schizosaccharomyces pombe (strain 972 / ATCC 24843) (Fission yeast).